We begin with the raw amino-acid sequence, 140 residues long: MALPKANRLKSRHDFQAVFREGLRRNSSHFTLRALKPSSAKKSSLDTAAKTQPADDVQDIPSTLIGVSISTKVSKRAVVRNRIKRQITAAMQQLLPRLAPGWKLVVIVKPTAAESKCGSQQFLQELEQLLAQTEVLHGHS.

The disordered stretch occupies residues 33-54 (RALKPSSAKKSSLDTAAKTQPA).

It belongs to the RnpA family. In terms of assembly, consists of a catalytic RNA component (M1 or rnpB) and a protein subunit.

It catalyses the reaction Endonucleolytic cleavage of RNA, removing 5'-extranucleotides from tRNA precursor.. Functionally, RNaseP catalyzes the removal of the 5'-leader sequence from pre-tRNA to produce the mature 5'-terminus. It can also cleave other RNA substrates such as 4.5S RNA. The protein component plays an auxiliary but essential role in vivo by binding to the 5'-leader sequence and broadening the substrate specificity of the ribozyme. This chain is Ribonuclease P protein component, found in Trichormus variabilis (strain ATCC 29413 / PCC 7937) (Anabaena variabilis).